The primary structure comprises 194 residues: 2,4-dinitrotoluene dioxygenase system, small oxygenase component (194 aa).

This sequence belongs to the bacterial ring-hydroxylating dioxygenase beta subunit family. In terms of assembly, the 2,4-dinitrotoluene dioxygenase (DNTDO) multicomponent enzyme system is composed of an electron transfer component and a dioxygenase component (iron sulfur protein (ISP)). The electron transfer component is composed of a ferredoxin reductase (DntAa) and a ferredoxin (DntAb), and the dioxygenase component is formed of a large alpha subunit (DntAc) and a small beta subunit (DntAd).

Functionally, component of the 2,4-dinitrotoluene dioxygenase (DNTDO) multicomponent enzyme system which catalyzes the incorporation of both atoms of molecular oxygen into 2,4-dinitrotoluene (DNT) to form 4-methyl-5-nitrocatechol (MNC) and nitrite. The beta subunit seems to have a structural role in the holoenzyme. Also able to convert naphthalene to cis-(1R,2S)-dihydroxy-1,2-dihydronaphthalene. The sequence is that of 2,4-dinitrotoluene dioxygenase system, small oxygenase component from Burkholderia sp. (strain RASC).